A 1176-amino-acid chain; its full sequence is Myosin light chain kinase, smooth muscle (1176 aa).

Positions 1–41 are actin-binding (calcium/calmodulin-sensitive); it reads MDFRANLQRQVKPKTLSEEERKVHGPQQVDFRSVLAKKGTP. Positions 1 to 354 are disordered; sequence MDFRANLQRQ…SEKRPESRGT (354 aa). Residues 26–41 are calmodulin-binding; that stretch reads PQQVDFRSVLAKKGTP. Pro residues predominate over residues 43–55; sequence TPVPEKVPPPKPA. 16 consecutive repeat copies span residues 100-111, 112-123, 124-135, 136-147, 148-159, 160-171, 172-183, 184-195, 196-207, 208-219, 220-231, 232-243, 244-255, 256-267, 268-279, and 280-291. Residues 100-291 form a 16 X 12 AA tandem repeats region; that stretch reads FLKPVGNAKL…KLVGNAKPAE (192 aa). Phosphoserine is present on serine 202. Residues 319–721 form an actin-binding (calcium/calmodulin-insensitive) region; it reads PTGKEELKKE…TVTVNTEQKV (403 aa). Positions 320–335 are enriched in basic and acidic residues; it reads TGKEELKKEIKNDVNC. Positions 356–444 constitute an Ig-like C2-type 1 domain; the sequence is PTFEEKLQDL…GQAESSCQVT (89 aa). An intrachain disulfide couples cysteine 377 to cysteine 428. A disordered region spans residues 448-497; it reads PDAPTSENAKAPEMKARRPKSSLPPVLGTESDATVKKKPAPKTPPKAAMP. The Ig-like C2-type 2 domain occupies 498-586; sequence PQIIQFPEDQ…GSRQAQVNLT (89 aa). A Fibronectin type-III domain is found at 594 to 686; it reads PAGTPCASDI…QESELTALGE (93 aa). The interval 673–707 is disordered; the sequence is SEPSQESELTALGEKPEEEPKDEVEVSDDDEKEPE. A compositionally biased stretch (acidic residues) spans 688–706; it reads PEEEPKDEVEVSDDDEKEP. Phosphoserine is present on serine 699. Tyrosine 710 carries the post-translational modification Phosphotyrosine; by ABL1. The region spanning 725-980 is the Protein kinase domain; the sequence is YDIEERLGSG…CTQCLQHPWL (256 aa). ATP contacts are provided by residues 731–739 and lysine 754; that span reads LGSGKFGQV. Tyrosine 836 is subject to Phosphotyrosine; by ABL1. Residue aspartate 846 is the Proton acceptor of the active site. The residue at position 896 (tyrosine 896) is a Phosphotyrosine; by ABL1. Residues 972-1035 are calmodulin-binding; it reads TQCLQHPWLM…SGLSGRKSST (64 aa). 5 positions are modified to phosphoserine: serine 1020, serine 1021, serine 1033, serine 1034, and serine 1037. The residue at position 1039 (threonine 1039) is a Phosphothreonine. Phosphoserine is present on serine 1040. Positions 1069–1158 constitute an Ig-like C2-type 3 domain; it reads PYFSKTIRDL…GEATCTAELI (90 aa). Cysteine 1090 and cysteine 1142 form a disulfide bridge.

Belongs to the protein kinase superfamily. CAMK Ser/Thr protein kinase family. All isoforms including Telokin bind calmodulin. Interacts with SVIL. Interacts with CTTN; this interaction is reduced during thrombin-induced endothelial cell (EC) contraction but is promoted by the barrier-protective agonist sphingosine 1-phosphate (S1P) within lamellipodia. A complex made of ABL1, CTTN and MYLK regulates cortical actin-based cytoskeletal rearrangement critical to sphingosine 1-phosphate (S1P)-mediated endothelial cell (EC) barrier enhancement. Binds to NAA10/ARD1 and PTK2B/PYK2. It depends on Mg(2+) as a cofactor. Ca(2+) is required as a cofactor. Post-translationally, the C-terminus is deglutamylated by AGTPBP1/CCP1, AGBL1/CCP4 and AGBL4/CCP6, leading to the formation of Myosin light chain kinase, smooth muscle, deglutamylated form. The consequences of C-terminal deglutamylation are unknown. Can probably be down-regulated by phosphorylation. Tyrosine phosphorylation by ABL1 increases kinase activity, reverses MLCK-mediated inhibition of Arp2/3-mediated actin polymerization, and enhances CTTN-binding. Phosphorylation by SRC promotes CTTN binding.

It localises to the cytoplasm. The protein resides in the cell projection. It is found in the lamellipodium. The protein localises to the cleavage furrow. Its subcellular location is the cytoskeleton. It localises to the stress fiber. It carries out the reaction L-seryl-[myosin light chain] + ATP = O-phospho-L-seryl-[myosin light chain] + ADP + H(+). The enzyme catalyses L-threonyl-[myosin light chain] + ATP = O-phospho-L-threonyl-[myosin light chain] + ADP + H(+). In terms of biological role, calcium/calmodulin-dependent myosin light chain kinase implicated in smooth muscle contraction via phosphorylation of myosin light chains (MLC). Also regulates actin-myosin interaction through a non-kinase activity. Phosphorylates PTK2B/PYK2 and myosin light-chains. Involved in the inflammatory response (e.g. apoptosis, vascular permeability, leukocyte diapedesis), cell motility and morphology, airway hyperreactivity and other activities relevant to asthma. Required for tonic airway smooth muscle contraction that is necessary for physiological and asthmatic airway resistance. Necessary for gastrointestinal motility. Implicated in the regulation of endothelial as well as vascular permeability, probably via the regulation of cytoskeletal rearrangements. In the nervous system it has been shown to control the growth initiation of astrocytic processes in culture and to participate in transmitter release at synapses formed between cultured sympathetic ganglion cells. Critical participant in signaling sequences that result in fibroblast apoptosis. Plays a role in the regulation of epithelial cell survival. Required for epithelial wound healing, especially during actomyosin ring contraction during purse-string wound closure. Mediates RhoA-dependent membrane blebbing. Triggers TRPC5 channel activity in a calcium-dependent signaling, by inducing its subcellular localization at the plasma membrane. Promotes cell migration (including tumor cells) and tumor metastasis. PTK2B/PYK2 activation by phosphorylation mediates ITGB2 activation and is thus essential to trigger neutrophil transmigration during acute lung injury (ALI). May regulate optic nerve head astrocyte migration. Probably involved in mitotic cytoskeletal regulation. Regulates tight junction probably by modulating ZO-1 exchange in the perijunctional actomyosin ring. Mediates burn-induced microvascular barrier injury; triggers endothelial contraction in the development of microvascular hyperpermeability by phosphorylating MLC. Essential for intestinal barrier dysfunction. Mediates Giardia spp.-mediated reduced epithelial barrier function during giardiasis intestinal infection via reorganization of cytoskeletal F-actin and tight junctional ZO-1. Necessary for hypotonicity-induced Ca(2+) entry and subsequent activation of volume-sensitive organic osmolyte/anion channels (VSOAC) in cervical cancer cells. The chain is Myosin light chain kinase, smooth muscle (MYLK) from Bos taurus (Bovine).